Consider the following 135-residue polypeptide: Small ribosomal subunit protein bS18 (135 aa).

Residues 1–65 (MARPDMGGPK…GDEGGGRRGF (65 aa)) form a disordered region. A compositionally biased stretch (gly residues) spans 9–41 (PKTGGFGGPRSGGFGGGGGGGGGFGGGGFGGGR). Residues 42–61 (GGDRGDRGDRDDRGGDEGGG) show a composition bias toward basic and acidic residues.

Belongs to the bacterial ribosomal protein bS18 family. Part of the 30S ribosomal subunit. Forms a tight heterodimer with protein bS6.

Its function is as follows. Binds as a heterodimer with protein bS6 to the central domain of the 16S rRNA, where it helps stabilize the platform of the 30S subunit. This chain is Small ribosomal subunit protein bS18, found in Anaeromyxobacter sp. (strain K).